Consider the following 181-residue polypeptide: Large ribosomal subunit protein uL10 (181 aa).

This sequence belongs to the universal ribosomal protein uL10 family. In terms of assembly, part of the ribosomal stalk of the 50S ribosomal subunit. The N-terminus interacts with L11 and the large rRNA to form the base of the stalk. The C-terminus forms an elongated spine to which L12 dimers bind in a sequential fashion forming a multimeric L10(L12)X complex.

Functionally, forms part of the ribosomal stalk, playing a central role in the interaction of the ribosome with GTP-bound translation factors. This Fervidobacterium nodosum (strain ATCC 35602 / DSM 5306 / Rt17-B1) protein is Large ribosomal subunit protein uL10.